A 513-amino-acid polypeptide reads, in one-letter code: GMP synthase [glutamine-hydrolyzing] (513 aa).

Positions 9–198 (LILVLDFGSQ…VRRVCDCIGE (190 aa)) constitute a Glutamine amidotransferase type-1 domain. Cysteine 86 serves as the catalytic Nucleophile. Residues histidine 172 and glutamate 174 contribute to the active site. The region spanning 199–388 (WSMENFIEIE…LGIPEHLVWR (190 aa)) is the GMPS ATP-PPase domain. 226 to 232 (SGGVDSS) provides a ligand contact to ATP.

Homodimer.

It carries out the reaction XMP + L-glutamine + ATP + H2O = GMP + L-glutamate + AMP + diphosphate + 2 H(+). It participates in purine metabolism; GMP biosynthesis; GMP from XMP (L-Gln route): step 1/1. Functionally, catalyzes the synthesis of GMP from XMP. In Staphylococcus saprophyticus subsp. saprophyticus (strain ATCC 15305 / DSM 20229 / NCIMB 8711 / NCTC 7292 / S-41), this protein is GMP synthase [glutamine-hydrolyzing].